The primary structure comprises 392 residues: Chaperone protein DnaJ (392 aa).

The 66-residue stretch at 2–67 (DYYTILGVAK…QKRESYDRYG (66 aa)) folds into the J domain. Residues 149-227 (GVEKELLVSG…CRGQGRIKDK (79 aa)) form a CR-type zinc finger. Cysteine 162, cysteine 165, cysteine 179, cysteine 182, cysteine 201, cysteine 204, cysteine 215, and cysteine 218 together coordinate Zn(2+). 4 CXXCXGXG motif repeats span residues 162–169 (CDACSGSG), 179–186 (CDRCKGSG), 201–208 (CPDCSGEG), and 215–222 (CSVCRGQG).

This sequence belongs to the DnaJ family. In terms of assembly, homodimer. The cofactor is Zn(2+).

Its subcellular location is the cytoplasm. In terms of biological role, participates actively in the response to hyperosmotic and heat shock by preventing the aggregation of stress-denatured proteins and by disaggregating proteins, also in an autonomous, DnaK-independent fashion. Unfolded proteins bind initially to DnaJ; upon interaction with the DnaJ-bound protein, DnaK hydrolyzes its bound ATP, resulting in the formation of a stable complex. GrpE releases ADP from DnaK; ATP binding to DnaK triggers the release of the substrate protein, thus completing the reaction cycle. Several rounds of ATP-dependent interactions between DnaJ, DnaK and GrpE are required for fully efficient folding. Also involved, together with DnaK and GrpE, in the DNA replication of plasmids through activation of initiation proteins. The polypeptide is Chaperone protein DnaJ (Chlamydia trachomatis serovar L2 (strain ATCC VR-902B / DSM 19102 / 434/Bu)).